A 254-amino-acid chain; its full sequence is Hydroxyacylglutathione hydrolase (254 aa).

Zn(2+) is bound by residues H54, H56, D58, H59, H111, D130, and H168.

The protein belongs to the metallo-beta-lactamase superfamily. Glyoxalase II family. Monomer. It depends on Zn(2+) as a cofactor.

The catalysed reaction is an S-(2-hydroxyacyl)glutathione + H2O = a 2-hydroxy carboxylate + glutathione + H(+). It participates in secondary metabolite metabolism; methylglyoxal degradation; (R)-lactate from methylglyoxal: step 2/2. Functionally, thiolesterase that catalyzes the hydrolysis of S-D-lactoyl-glutathione to form glutathione and D-lactic acid. The protein is Hydroxyacylglutathione hydrolase of Legionella pneumophila (strain Corby).